A 313-amino-acid polypeptide reads, in one-letter code: Heterogeneous nuclear ribonucleoproteins C1/C2 (313 aa).

Position 2 is an N-acetylalanine (alanine 2). Residues lysine 8, lysine 50, lysine 89, and lysine 94 each participate in a glycyl lysine isopeptide (Lys-Gly) (interchain with G-Cter in SUMO2) cross-link. Residues 16-87 (SRVFIGNLNT…QVLDINLAAE (72 aa)) enclose the RRM domain. Phosphoserine occurs at positions 113, 115, and 121. Disordered regions lie at residues 139–191 (YPAR…KLKG) and 219–313 (EKEQ…EDDS). A Nuclear localization signal motif is present at residues 155–161 (PSKRQRV). A phosphoserine mark is found at serine 162 and serine 166. Positions 175–186 (SKSGQRGSSSKS) are enriched in low complexity. Lysine 176 is subject to N6-acetyllysine; alternate. A Glycyl lysine isopeptide (Lys-Gly) (interchain with G-Cter in SUMO2); alternate cross-link involves residue lysine 176. Residues 191–226 (GDDLQAIKKELTQIKQKVDSLLESLEKIEKEQSKQA) adopt a coiled-coil conformation. Residue lysine 224 forms a Glycyl lysine isopeptide (Lys-Gly) (interchain with G-Cter in SUMO2) linkage. 3 positions are modified to phosphoserine: serine 229, serine 231, and serine 232. Lysine 237 is covalently cross-linked (Glycyl lysine isopeptide (Lys-Gly) (interchain with G-Cter in SUMO2)). Lysine 240 is covalently cross-linked (Glycyl lysine isopeptide (Lys-Gly) (interchain with G-Cter in SUMO2); alternate). Lysine 240 participates in a covalent cross-link: Glycyl lysine isopeptide (Lys-Gly) (interchain with G-Cter in SUMO1); alternate. 4 positions are modified to phosphoserine: serine 241, serine 246, serine 247, and serine 249. Positions 250-261 (VKKDETNVKMES) are enriched in basic and acidic residues. Residues lysine 251 and lysine 252 each participate in a glycyl lysine isopeptide (Lys-Gly) (interchain with G-Cter in SUMO2) cross-link. Lysine 258 is covalently cross-linked (Glycyl lysine isopeptide (Lys-Gly) (interchain with G-Cter in SUMO2); alternate). Lysine 258 is covalently cross-linked (Glycyl lysine isopeptide (Lys-Gly) (interchain with G-Cter in SUMO); alternate). Phosphoserine occurs at positions 261 and 268. The segment covering 263-284 (AGADDSAEEGDLLDDDDNEDRG) has biased composition (acidic residues). A compositionally biased stretch (basic and acidic residues) spans 285–294 (DDQLELKDDE). Residues 295–313 (KEPEEGEDDRDSANGEDDS) are compositionally biased toward acidic residues. A phosphoserine mark is found at serine 306 and serine 313.

This sequence belongs to the RRM HNRPC family. RALY subfamily. Tetramer composed of 3 copies of isoform C1 and 1 copy of isoform C2. Assembly of 3 tetramers with bound pre-mRNA gives rise to a 19S complex that interacts with HNRNPA2B1 tetramers. Component of the 40S hnRNP particle. Identified in the spliceosome C complex. Interacts with IGF2BP1. Interacts with DHX9; this interaction is direct, enhanced probably by their concomitant binding to RNA and mediates the attachment to actin filaments. Interacts with PPIA/CYPA. Post-translationally, phosphorylated on Ser-268 and Ser-306 in resting cells. Sumoylated. Sumoylation reduces affinity for mRNA. In terms of processing, ubiquitinated and degraded after nucleo-cytoplasmic transport by YWHAE.

The protein resides in the nucleus. Its function is as follows. Binds pre-mRNA and nucleates the assembly of 40S hnRNP particles. Interacts with poly-U tracts in the 3'-UTR or 5'-UTR of mRNA and modulates the stability and the level of translation of bound mRNA molecules. Single HNRNPC tetramers bind 230-240 nucleotides. Trimers of HNRNPC tetramers bind 700 nucleotides. May play a role in the early steps of spliceosome assembly and pre-mRNA splicing. N6-methyladenosine (m6A) has been shown to alter the local structure in mRNAs and long non-coding RNAs (lncRNAs) via a mechanism named 'm(6)A-switch', facilitating binding of HNRNPC, leading to regulation of mRNA splicing. The sequence is that of Heterogeneous nuclear ribonucleoproteins C1/C2 (Hnrnpc) from Mus musculus (Mouse).